A 516-amino-acid chain; its full sequence is Endoglucanase 20 (516 aa).

Positions 1 to 23 are cleaved as a signal peptide; sequence MAAGMVATMVLLTCLAAGGLVVG. The N-linked (GlcNAc...) asparagine glycan is linked to asparagine 83. Aspartate 93 acts as the Nucleophile in catalysis. Catalysis depends on residues histidine 416, aspartate 468, and glutamate 477.

Belongs to the glycosyl hydrolase 9 (cellulase E) family.

Its subcellular location is the secreted. The catalysed reaction is Endohydrolysis of (1-&gt;4)-beta-D-glucosidic linkages in cellulose, lichenin and cereal beta-D-glucans.. This chain is Endoglucanase 20 (GLU15), found in Oryza sativa subsp. japonica (Rice).